We begin with the raw amino-acid sequence, 193 residues long: Xanthine phosphoribosyltransferase (193 aa).

The xanthine site is built by Leu-20 and Thr-27. Position 128-132 (128-132) interacts with 5-phospho-alpha-D-ribose 1-diphosphate; sequence ANGQA. Lys-156 contributes to the xanthine binding site.

It belongs to the purine/pyrimidine phosphoribosyltransferase family. Xpt subfamily. As to quaternary structure, homodimer.

The protein localises to the cytoplasm. The enzyme catalyses XMP + diphosphate = xanthine + 5-phospho-alpha-D-ribose 1-diphosphate. It functions in the pathway purine metabolism; XMP biosynthesis via salvage pathway; XMP from xanthine: step 1/1. Its function is as follows. Converts the preformed base xanthine, a product of nucleic acid breakdown, to xanthosine 5'-monophosphate (XMP), so it can be reused for RNA or DNA synthesis. The sequence is that of Xanthine phosphoribosyltransferase from Streptococcus equi subsp. equi (strain 4047).